Here is a 902-residue protein sequence, read N- to C-terminus: Mitochondrial aspartate-glutamate transporter AGC1 (902 aa).

3 Solcar repeats span residues 528-614 (FDSL…MRNR), 622-710 (LSLF…LKKD), and 725-813 (LKTW…FKGF). Transmembrane regions (helical) follow at residues 534 to 554 (FSLGSIAGCIGATVVYPIDFI), 591 to 611 (GPQLIGVAPEKAIKLTVNDFM), 622 to 642 (LSLFPEIISGASAGACQVIFT), 681 to 702 (GLYNGVAACLMRDVPFSAIYFP), 731 to 751 (LTAGAIAGMPAAFLTTPFDVI), and 786 to 806 (FKGGGARVLRSSPQFGFTLAA).

The protein belongs to the mitochondrial carrier (TC 2.A.29) family.

The protein resides in the mitochondrion inner membrane. In terms of biological role, calcium-dependent mitochondrial aspartate and glutamate carrier. Transport of glutamate in mitochondria is required for mitochondrial transamination reactions and ornithine synthesis. Plays also a role in malate-aspartate NADH shuttle, which is critical for growth on acetate and fatty acids. The sequence is that of Mitochondrial aspartate-glutamate transporter AGC1 (AGC1) from Saccharomyces cerevisiae (strain ATCC 204508 / S288c) (Baker's yeast).